Here is a 184-residue protein sequence, read N- to C-terminus: Large ribosomal subunit protein uL6 (184 aa).

It belongs to the universal ribosomal protein uL6 family. In terms of assembly, part of the 50S ribosomal subunit.

This protein binds to the 23S rRNA, and is important in its secondary structure. It is located near the subunit interface in the base of the L7/L12 stalk, and near the tRNA binding site of the peptidyltransferase center. This Thermotoga petrophila (strain ATCC BAA-488 / DSM 13995 / JCM 10881 / RKU-1) protein is Large ribosomal subunit protein uL6.